Consider the following 370-residue polypeptide: Phosphate-binding protein PstS 3 (370 aa).

The signal sequence occupies residues 1–22 (MKLNRFGAAVGVLAAGALVLSA). Cys-23 carries the N-palmitoyl cysteine lipid modification. The S-diacylglycerol cysteine moiety is linked to residue Cys-23. Phosphate-binding positions include 56–58 (STA), Ser-86, Asp-104, and 191–193 (SGT).

This sequence belongs to the PstS family. As to quaternary structure, the complex is composed of two ATP-binding proteins (PstB), two transmembrane proteins (PstC and PstA) and a solute-binding protein (PstS).

The protein localises to the cell membrane. In terms of biological role, part of the ABC transporter complex PstSACB involved in phosphate import. The chain is Phosphate-binding protein PstS 3 (pstS3) from Mycobacterium bovis (strain ATCC BAA-935 / AF2122/97).